Consider the following 207-residue polypeptide: Ras-related protein Rab-2A (207 aa).

12-20 contacts GTP; it reads GDTGVGKSC. Residues 34–42 carry the Effector region motif; it reads HDLTIGVEF. Residues 60–64, 118–121, and 148–150 contribute to the GTP site; these read DTAGQ, NKSD, and SAK. A disordered region spans residues 187–207; that stretch reads GAPTSKQDGTDQKPAGGGCCK. 2 S-geranylgeranyl cysteine lipidation sites follow: Cys205 and Cys206.

The protein belongs to the small GTPase superfamily. Rab family.

The protein resides in the cell membrane. The catalysed reaction is GTP + H2O = GDP + phosphate + H(+). Its activity is regulated as follows. Regulated by guanine nucleotide exchange factors (GEFs) which promote the exchange of bound GDP for free GTP, GTPase activating proteins (GAPs) which increase the GTP hydrolysis activity, and GDP dissociation inhibitors which inhibit the dissociation of the nucleotide from the GTPase. The small GTPases Rab are key regulators of intracellular membrane trafficking, from the formation of transport vesicles to their fusion with membranes. Rabs cycle between active GTP-bound and inactive GDP-bound states. In their active state, drive transport of vesicular carriers from donor organelles to acceptor organelles to regulate the membrane traffic that maintains organelle identity and morphology. In Dictyostelium discoideum (Social amoeba), this protein is Ras-related protein Rab-2A (rab2A).